We begin with the raw amino-acid sequence, 99 residues long: Large ribosomal subunit protein eL21 (99 aa).

The span at 1-18 (MVKHSRGNRTRSRKLLKK) shows a compositional bias: basic residues. A disordered region spans residues 1–26 (MVKHSRGNRTRSRKLLKKSPRERGAV).

It belongs to the eukaryotic ribosomal protein eL21 family.

This Metallosphaera sedula (strain ATCC 51363 / DSM 5348 / JCM 9185 / NBRC 15509 / TH2) protein is Large ribosomal subunit protein eL21.